We begin with the raw amino-acid sequence, 425 residues long: Pyruvate dehydrogenase E1 component subunit alpha-3, chloroplastic (425 aa).

Residues 1-66 constitute a chloroplast transit peptide; it reads MAAASSFTAA…VLPGNKAAPA (66 aa). Residues His-109, Tyr-135, Arg-136, Ala-184, Ile-186, Asp-224, Gly-225, and Asn-253 each coordinate pyruvate. Thiamine diphosphate contacts are provided by Tyr-135, Arg-136, Ala-184, Ile-186, Asp-224, Gly-225, Asn-253, and His-322. Mg(2+) is bound at residue Asp-224. Asn-253 serves as a coordination point for Mg(2+).

In terms of assembly, tetramer of 2 alpha and 2 beta subunits. It depends on thiamine diphosphate as a cofactor. Requires Mg(2+) as cofactor.

It localises to the plastid. It is found in the chloroplast. It catalyses the reaction N(6)-[(R)-lipoyl]-L-lysyl-[protein] + pyruvate + H(+) = N(6)-[(R)-S(8)-acetyldihydrolipoyl]-L-lysyl-[protein] + CO2. Functionally, the pyruvate dehydrogenase complex catalyzes the overall conversion of pyruvate to acetyl-CoA and CO(2). It contains multiple copies of three enzymatic components: pyruvate dehydrogenase (E1), dihydrolipoamide acetyltransferase (E2) and lipoamide dehydrogenase (E3). The sequence is that of Pyruvate dehydrogenase E1 component subunit alpha-3, chloroplastic from Oryza sativa subsp. japonica (Rice).